A 4731-amino-acid chain; its full sequence is Dynein axonemal heavy chain 8 (4731 aa).

Residues 1–145 form a disordered region; sequence MESEEGNAEP…SKFRRSMTGI (145 aa). Pro residues predominate over residues 9–55; sequence EPPPPSEEAPPPVVEEAPPPLPPEDTAPPPPEEQAPPPEGDAAPPPT. Basic and acidic residues predominate over residues 66-75; that stretch reads EAPHPEDPKL. A compositionally biased stretch (acidic residues) spans 94–106; the sequence is SDEEVTLPEDEES. Over residues 122 to 133 the composition is skewed to polar residues; sequence SVLSDGISQSSR. The stretch at 145–169 forms a coiled coil; that stretch reads IPNLQETLKEKQARFREARENRKMK. At Ser917 the chain carries Phosphoserine. Residues 1177–1201 form a disordered region; the sequence is FQNNSRGSDQPPASGKPLKKEERSF. The stretch at 1543 to 1567 forms a coiled coil; sequence DVDIEKINAELQEFQNRCRKLPRAL. AAA stretches follow at residues 2049–2271, 2331–2550, 2657–2910, and 3021–3275; these read YQNE…VLRT, SAVD…KLSL, FYPT…IWQG, and QFNE…YRRR. ATP contacts are provided by residues 2087-2094 and 2369-2376; these read GPAGTGKT and GPSGSGKT. A stalk region spans residues 3290–3587; sequence YKSIYTDKVK…MDLLNDADMC (298 aa). Coiled-coil stretches lie at residues 3313–3405, 3531–3583, and 3836–3871; these read DKLM…ALNT, LKAN…LLND, and RVILTEKQELESERVKLLEDVTFNKRKMKELEDNLL. AAA regions lie at residues 3673 to 3903 and 4118 to 4332; these read LVDP…EVSE and ARKY…FIQN.

It belongs to the dynein heavy chain family. Consists of at least two heavy chains and a number of intermediate and light chains. As to expression, isoform 1 and/or isoform 2 are expressed in spermatocytes and mature sperm (at protein level). Testis-specific. Accumulates exclusively in mid to late spermatocytes.

The protein localises to the cytoplasm. It localises to the cytoskeleton. Its subcellular location is the flagellum axoneme. In terms of biological role, force generating protein component of the outer dynein arms (ODAs) in the sperm flagellum. Produces force towards the minus ends of microtubules. Dynein has ATPase activity; the force-producing power stroke is thought to occur on release of ADP. Involved in sperm motility; implicated in sperm flagellar assembly. The protein is Dynein axonemal heavy chain 8 (Dnah8) of Mus musculus (Mouse).